A 241-amino-acid chain; its full sequence is UDP-2,3-diacylglucosamine hydrolase (241 aa).

Residues D9, H11, D42, N79, and H114 each coordinate Mn(2+). N79–R80 serves as a coordination point for substrate. D122, S160, N164, K167, and H195 together coordinate substrate. The Mn(2+) site is built by H195 and H197.

The protein belongs to the LpxH family. It depends on Mn(2+) as a cofactor.

It is found in the cell inner membrane. It carries out the reaction UDP-2-N,3-O-bis[(3R)-3-hydroxytetradecanoyl]-alpha-D-glucosamine + H2O = 2-N,3-O-bis[(3R)-3-hydroxytetradecanoyl]-alpha-D-glucosaminyl 1-phosphate + UMP + 2 H(+). Its pathway is glycolipid biosynthesis; lipid IV(A) biosynthesis; lipid IV(A) from (3R)-3-hydroxytetradecanoyl-[acyl-carrier-protein] and UDP-N-acetyl-alpha-D-glucosamine: step 4/6. Functionally, hydrolyzes the pyrophosphate bond of UDP-2,3-diacylglucosamine to yield 2,3-diacylglucosamine 1-phosphate (lipid X) and UMP by catalyzing the attack of water at the alpha-P atom. Involved in the biosynthesis of lipid A, a phosphorylated glycolipid that anchors the lipopolysaccharide to the outer membrane of the cell. In Shewanella frigidimarina (strain NCIMB 400), this protein is UDP-2,3-diacylglucosamine hydrolase.